A 2971-amino-acid polypeptide reads, in one-letter code: uncharacterized protein (2971 aa).

A disordered region spans residues 929-964 (SANFSNGPEESSLSTRLHIQKKRKAKKQRLETRRQK). Residues 936–945 (PEESSLSTRL) are compositionally biased toward polar residues. Residues 946-955 (HIQKKRKAKK) show a composition bias toward basic residues.

The protein localises to the plastid. It localises to the chloroplast. This is an uncharacterized protein from Chlamydomonas reinhardtii (Chlamydomonas smithii).